A 204-amino-acid chain; its full sequence is Urease accessory protein UreG 1 (204 aa).

14-21 provides a ligand contact to GTP; the sequence is GPVGSGKT.

Belongs to the SIMIBI class G3E GTPase family. UreG subfamily. As to quaternary structure, homodimer. UreD, UreF and UreG form a complex that acts as a GTP-hydrolysis-dependent molecular chaperone, activating the urease apoprotein by helping to assemble the nickel containing metallocenter of UreC. The UreE protein probably delivers the nickel.

Its subcellular location is the cytoplasm. Facilitates the functional incorporation of the urease nickel metallocenter. This process requires GTP hydrolysis, probably effectuated by UreG. The polypeptide is Urease accessory protein UreG 1 (Methylorubrum populi (strain ATCC BAA-705 / NCIMB 13946 / BJ001) (Methylobacterium populi)).